Consider the following 444-residue polypeptide: Ribulose bisphosphate carboxylase (444 aa).

The Proton acceptor role is filled by Lys-163. Lys-165 lines the substrate pocket. Positions 189, 191, and 192 each coordinate Mg(2+). At Lys-189 the chain carries N6-carboxylysine. His-281 functions as the Proton acceptor in the catalytic mechanism. Residues Arg-282, His-314, 367–369 (SGG), and 389–392 (QLGG) contribute to the substrate site.

It belongs to the RuBisCO large chain family. Type III subfamily. As to quaternary structure, homodimer or homodecamer. In contrast to form I RuBisCO, the form III RuBisCO is composed solely of large subunits. Mg(2+) is required as a cofactor.

It carries out the reaction 2 (2R)-3-phosphoglycerate + 2 H(+) = D-ribulose 1,5-bisphosphate + CO2 + H2O. It catalyses the reaction D-ribulose 1,5-bisphosphate + O2 = 2-phosphoglycolate + (2R)-3-phosphoglycerate + 2 H(+). Catalyzes the addition of molecular CO(2) and H(2)O to ribulose 1,5-bisphosphate (RuBP), generating two molecules of 3-phosphoglycerate (3-PGA). Functions in an archaeal AMP degradation pathway, together with AMP phosphorylase and R15P isomerase. The polypeptide is Ribulose bisphosphate carboxylase (Thermococcus onnurineus (strain NA1)).